The sequence spans 308 residues: Uricase-2 (308 aa).

Active-site charge relay system residues include Lys17 and Thr63. 7 residues coordinate urate: Thr63, Asp64, Phe165, Arg182, Val237, Gln238, and Asn264. Catalysis depends on His266, which acts as the Charge relay system. The short motif at 306–308 (SKL) is the Microbody targeting signal element.

Belongs to the uricase family. In terms of assembly, homotetramer. Expressed predominantly in the uninfected cells of the central tissue of the root nodule. Also expressed in the nodule parenchyma cells and vascular tissue, in the roots, stems and leaves of uninfected adult plants, and in the cotyledons, roots and hypocotyls of developing seedlings. Localized to the metaxylem parenchyma cells and phloem fibers of developing roots.

It is found in the peroxisome. The enzyme catalyses urate + O2 + H2O = 5-hydroxyisourate + H2O2. The protein operates within purine metabolism; urate degradation; (S)-allantoin from urate: step 1/3. Catalyzes the oxidation of uric acid to 5-hydroxyisourate, which is further processed to form (S)-allantoin. The chain is Uricase-2 (URIII) from Phaseolus vulgaris (Kidney bean).